Reading from the N-terminus, the 330-residue chain is Phenylalanine--tRNA ligase alpha subunit (330 aa).

A Mg(2+)-binding site is contributed by E257.

It belongs to the class-II aminoacyl-tRNA synthetase family. Phe-tRNA synthetase alpha subunit type 1 subfamily. As to quaternary structure, tetramer of two alpha and two beta subunits. Mg(2+) is required as a cofactor.

The protein localises to the cytoplasm. It carries out the reaction tRNA(Phe) + L-phenylalanine + ATP = L-phenylalanyl-tRNA(Phe) + AMP + diphosphate + H(+). The protein is Phenylalanine--tRNA ligase alpha subunit of Nostoc punctiforme (strain ATCC 29133 / PCC 73102).